The following is a 1196-amino-acid chain: Phosphoglucan, water dikinase, chloroplastic (1196 aa).

The N-terminal 54 residues, 1–54, are a transit peptide targeting the chloroplast; it reads MESIGSHCCSSPFTFITRNSSSSLPRLVNITHRVNLSHQSHRLRNSNSRLTCTA. T55 carries the post-translational modification N-acetylthreonine. In terms of domain architecture, CBM20 spans 66–166; that stretch reads KKDGSGTKVR…NFSVVCHWDA (101 aa). The interval 174–200 is disordered; it reads PQEVGNDDDVGDGGHERDNHDVGDDRV. A compositionally biased stretch (basic and acidic residues) spans 185–200; sequence DGGHERDNHDVGDDRV. H759 (tele-phosphohistidine intermediate) is an active-site residue. The disordered stretch occupies residues 804-855; sequence LSTEGRSRTSKSSATKKTDKNSLSKKKTDKKSLSIDDEESKPGSSSSNSLLY.

It belongs to the PEP-utilizing enzyme family. Homodimer. The cofactor is Mg(2+). As to expression, in all starch containing tissues (e.g. roots, leaves, stems, inflorescence and siliques).

The protein resides in the plastid. The protein localises to the chloroplast. It catalyses the reaction [(1-&gt;4)-6-phospho-alpha-D-glucosyl](n) + n ATP + n H2O = [(1-&gt;4)-3,6-bisphospho-alpha-D-glucosyl](n) + n AMP + n phosphate + 2n H(+). In terms of biological role, mediates the incorporation of phosphate into starch-like phospho-alpha-glucan, mostly at the C-3 position of glucose units. Required for starch degradation, suggesting that the phosphate content of starch regulates its degradability. The protein is Phosphoglucan, water dikinase, chloroplastic (GWD3) of Arabidopsis thaliana (Mouse-ear cress).